The following is a 357-amino-acid chain: Isopentenyl-diphosphate delta-isomerase (357 aa).

6 to 7 (RK) contacts substrate. Residues serine 62, 63 to 65 (AMT), serine 93, and asparagine 122 each bind FMN. A substrate-binding site is contributed by 93 to 95 (SQR). Glutamine 156 provides a ligand contact to substrate. Glutamate 157 contributes to the Mg(2+) binding site. FMN is bound by residues lysine 186, threonine 216, 267-269 (GVR), and 288-289 (AL).

This sequence belongs to the IPP isomerase type 2 family. In terms of assembly, homooctamer. Dimer of tetramers. FMN is required as a cofactor. The cofactor is NADPH. Requires Mg(2+) as cofactor.

It localises to the cytoplasm. The catalysed reaction is isopentenyl diphosphate = dimethylallyl diphosphate. Involved in the biosynthesis of isoprenoids. Catalyzes the 1,3-allylic rearrangement of the homoallylic substrate isopentenyl (IPP) to its allylic isomer, dimethylallyl diphosphate (DMAPP). The protein is Isopentenyl-diphosphate delta-isomerase of Methanothrix thermoacetophila (strain DSM 6194 / JCM 14653 / NBRC 101360 / PT) (Methanosaeta thermophila).